Consider the following 215-residue polypeptide: MKLFIDTANVEEIKEVNDMGVICGVTTNPSLVAKEGRDFNEVIREITSIVDGPISGEVIALDAEGMIKEGREIAKIHKNMVVKIPMTEEGLKAVKVLSSEGIKTNVTLIFSAGQALLAARAGATFVSPFLGRLDDIGADSIGLIESIVNIFDIHDIRTEIIAASIRSPKHVIDSAEAGAHIGTVPYKVLKQLIKHPLTDIGIERFMKDWKEAFNK.

Lys83 functions as the Schiff-base intermediate with substrate in the catalytic mechanism.

The protein belongs to the transaldolase family. Type 3B subfamily.

The protein resides in the cytoplasm. The enzyme catalyses D-sedoheptulose 7-phosphate + D-glyceraldehyde 3-phosphate = D-erythrose 4-phosphate + beta-D-fructose 6-phosphate. It participates in carbohydrate degradation; pentose phosphate pathway; D-glyceraldehyde 3-phosphate and beta-D-fructose 6-phosphate from D-ribose 5-phosphate and D-xylulose 5-phosphate (non-oxidative stage): step 2/3. Its function is as follows. Transaldolase is important for the balance of metabolites in the pentose-phosphate pathway. The protein is Probable transaldolase (tal) of Clostridium acetobutylicum (strain ATCC 824 / DSM 792 / JCM 1419 / IAM 19013 / LMG 5710 / NBRC 13948 / NRRL B-527 / VKM B-1787 / 2291 / W).